We begin with the raw amino-acid sequence, 187 residues long: MIIIVTGTPGVGKTVASKKLSEALNLNYLSLSQFVIENKLYTEYDELRQSYIIDEDKVKEELEKIISTSHLVIETIYPSLVSTADLVVVLRKNPFSLYNELKGRGWADIKVAENVEAEILGVISQEAREAFKDKVCEVDTTEMSTEQILNKILNKQCDGPIEWLVDTKVQRFLEELDKIISSYENDI.

The ATP site is built by glycine 10, glycine 12, lysine 13, threonine 14, and valine 15. Positions 30–53 (SLSQFVIENKLYTEYDELRQSYII) are NMP. Residues 103-113 (GRGWADIKVAE) are LID. Arginine 104 is an ATP binding site.

Belongs to the adenylate kinase family. AK6 subfamily. Interacts with uS11. Not a structural component of 40S pre-ribosomes, but transiently interacts with them by binding to uS11.

It carries out the reaction AMP + ATP = 2 ADP. It catalyses the reaction ATP + H2O = ADP + phosphate + H(+). In terms of biological role, broad-specificity nucleoside monophosphate (NMP) kinase that catalyzes the reversible transfer of the terminal phosphate group between nucleoside triphosphates and monophosphates. Also has ATPase activity. Involved in the late maturation steps of the 30S ribosomal particles, specifically 16S rRNA maturation. While NMP activity is not required for ribosome maturation, ATPase activity is. Associates transiently with small ribosomal subunit protein uS11. ATP hydrolysis breaks the interaction with uS11. May temporarily remove uS11 from the ribosome to enable a conformational change of the ribosomal RNA that is needed for the final maturation step of the small ribosomal subunit. This is Putative adenylate kinase from Saccharolobus islandicus (strain M.16.4 / Kamchatka #3) (Sulfolobus islandicus).